The chain runs to 90 residues: Mu-theraphotoxin-Phlo1b (90 aa).

The first 22 residues, 1–22 (MKVSVLITLAVLGVMFVWTSAA), serve as a signal peptide directing secretion. The propeptide occupies 23–50 (EQEDHGSDRRDSPALLKSLGRVFQSEER). Intrachain disulfides connect C52–C66, C59–C71, and C65–C79. A Phenylalanine amide modification is found at F85. A propeptide spanning residues 86–90 (GNEKS) is cleaved from the precursor.

Belongs to the neurotoxin 10 (Hwtx-1) family. 39 (Jztx-34) subfamily. In terms of tissue distribution, expressed by the venom gland.

Its subcellular location is the secreted. Gating-modifier toxin that inhibits voltage-gated sodium channel Nav by shifting the threshold for channel activation to more positive potentials. This toxin moderately inhibits human Nav1.7/SCN9A (IC(50)=360 nM) and weakly inhibits hNav1.2/SCN2A (37% inhibition at 1 uM peptide) and hNav1.5/SCN5A (&lt;20% inhibition at 1 uM peptide). Inhibition of Nav1.7 is voltage-dependent, with lower inhibition at more positive test pulses. This chain is Mu-theraphotoxin-Phlo1b, found in Phlogius sp. (Tarantula spider).